The sequence spans 149 residues: Envelope glycoprotein UL4 (149 aa).

A signal peptide spans 1 to 18; it reads MMLRTWISLPMVLLDAYC. Residues Asn-46, Asn-51, Asn-59, Asn-67, Asn-105, Asn-109, Asn-119, Asn-136, and Asn-145 are each glycosylated (N-linked (GlcNAc...) asparagine; by host).

This sequence belongs to the RL11 family. N-glycosylated and possibly O-glycosylated.

It is found in the virion membrane. The polypeptide is Envelope glycoprotein UL4 (UL4) (Human cytomegalovirus (strain Merlin) (HHV-5)).